A 388-amino-acid polypeptide reads, in one-letter code: Succinate--CoA ligase [ADP-forming] subunit beta (388 aa).

The ATP-grasp domain occupies 9-244 (KGVLSSFGVT…PDEYAAEELE (236 aa)). ATP is bound by residues K46, 53–55 (GRG), E99, V102, and E107. The Mg(2+) site is built by N199 and D213. Residues N264 and 320-322 (GIM) contribute to the substrate site.

This sequence belongs to the succinate/malate CoA ligase beta subunit family. Heterotetramer of two alpha and two beta subunits. Mg(2+) serves as cofactor.

It catalyses the reaction succinate + ATP + CoA = succinyl-CoA + ADP + phosphate. It carries out the reaction GTP + succinate + CoA = succinyl-CoA + GDP + phosphate. It participates in carbohydrate metabolism; tricarboxylic acid cycle; succinate from succinyl-CoA (ligase route): step 1/1. Functionally, succinyl-CoA synthetase functions in the citric acid cycle (TCA), coupling the hydrolysis of succinyl-CoA to the synthesis of either ATP or GTP and thus represents the only step of substrate-level phosphorylation in the TCA. The beta subunit provides nucleotide specificity of the enzyme and binds the substrate succinate, while the binding sites for coenzyme A and phosphate are found in the alpha subunit. In Anaplasma marginale (strain St. Maries), this protein is Succinate--CoA ligase [ADP-forming] subunit beta.